The following is a 591-amino-acid chain: MSLIHLIYFPTILSLILGTEGTPALTYGNLADNQHGNEEQGDVDMYPLYECSKKGAGVSSNNWYGACRGACSMTKNTTDVHMEIYYRNDSVGWIDVLSIQTTEIWKHSHVTWYGECEHNTKYGSSNTAPVSVILERLEFLHNGMSSWPYGHSIHVHDTISSPDCSYFDDVSRSGWRLIISKRALELKSDIAGEGYIVDPDVGYVYPVADGIGKGRTWHVWKASSVPSSGCYFKSAGITNCTLLMDTFLYSCPSLNIAFSARVGKHIKSTCVGDMNISTDGVTYQTLGSTDQGSISTQLVSLWHQSQEALIQQLILTINEALGKIETSYCESTCDLTEMLISQHTEHPMVIETPVGPWLPYSIDGKVSVLPCQGGQDLVVIKPIEICASPFMLKVKSLKSLDTYWWVPTDSHVAPFTQCSNRDDEEMIIKIQRKKPLIFEFWRGAYKLDYPYNSSGIWLDNPGGHIHRSSKWFPTLDSLSYSSPINLPLISKGIRKHIQAIVSTTEITSGGNVTSWTHSISTIAEAMFDSAAIAAGRVVMWWYTLEESVKRYLTVAFGLVLTVITIWAMSKLFFRSSPTYARAPTNIEWVRS.

The signal sequence occupies residues 1 to 21 (MSLIHLIYFPTILSLILGTEG). The Virion surface segment spans residues 22-552 (TPALTYGNLA…TLEESVKRYL (531 aa)). The chain crosses the membrane as a helical span at residues 553-573 (TVAFGLVLTVITIWAMSKLFF). At 574 to 591 (RSSPTYARAPTNIEWVRS) the chain is on the intravirion side.

Belongs to the nucleorhabdovirus glycoprotein family. In terms of assembly, homotrimer. Interacts with matrix protein. Glycosylatedby host. Glycosylation is crucial for glycoprotein export at the cell surface.

It is found in the virion membrane. In terms of biological role, attaches the virus to host cellular receptor, inducing endocytosis of the virion. In the endosome, the acidic pH induces conformational changes in the glycoprotein trimer, which trigger fusion between virus and cell membrane. The chain is Glycoprotein (G) from Rottboellia (Sorghum).